The following is a 146-amino-acid chain: Probable NADH dehydrogenase [ubiquinone] 1 alpha subcomplex subunit 12 (146 aa).

Belongs to the complex I NDUFA12 subunit family. As to quaternary structure, complex I is composed of 45 different subunits.

Its subcellular location is the mitochondrion inner membrane. In terms of biological role, accessory subunit of the mitochondrial membrane respiratory chain NADH dehydrogenase (Complex I), that is believed not to be involved in catalysis. Complex I functions in the transfer of electrons from NADH to the respiratory chain. The immediate electron acceptor for the enzyme is believed to be ubiquinone. The sequence is that of Probable NADH dehydrogenase [ubiquinone] 1 alpha subcomplex subunit 12 from Caenorhabditis elegans.